A 301-amino-acid chain; its full sequence is Nucleotide-binding protein ELI_02120 (301 aa).

Residue 12-19 (GMSGAGKS) participates in ATP binding. 62-65 (DSRT) provides a ligand contact to GTP.

Belongs to the RapZ-like family.

Functionally, displays ATPase and GTPase activities. This is Nucleotide-binding protein ELI_02120 from Erythrobacter litoralis (strain HTCC2594).